A 160-amino-acid chain; its full sequence is 6,7-dimethyl-8-ribityllumazine synthase (160 aa).

5-amino-6-(D-ribitylamino)uracil is bound by residues phenylalanine 23, 61–63 (SFE), and 85–87 (AVI). 90–91 (DT) serves as a coordination point for (2S)-2-hydroxy-3-oxobutyl phosphate. Histidine 93 functions as the Proton donor in the catalytic mechanism. Phenylalanine 118 is a 5-amino-6-(D-ribitylamino)uracil binding site. Arginine 132 is a binding site for (2S)-2-hydroxy-3-oxobutyl phosphate.

The protein belongs to the DMRL synthase family.

The enzyme catalyses (2S)-2-hydroxy-3-oxobutyl phosphate + 5-amino-6-(D-ribitylamino)uracil = 6,7-dimethyl-8-(1-D-ribityl)lumazine + phosphate + 2 H2O + H(+). The protein operates within cofactor biosynthesis; riboflavin biosynthesis; riboflavin from 2-hydroxy-3-oxobutyl phosphate and 5-amino-6-(D-ribitylamino)uracil: step 1/2. In terms of biological role, catalyzes the formation of 6,7-dimethyl-8-ribityllumazine by condensation of 5-amino-6-(D-ribitylamino)uracil with 3,4-dihydroxy-2-butanone 4-phosphate. This is the penultimate step in the biosynthesis of riboflavin. The polypeptide is 6,7-dimethyl-8-ribityllumazine synthase (Parasynechococcus marenigrum (strain WH8102)).